Here is a 1115-residue protein sequence, read N- to C-terminus: Receptor-type tyrosine-protein phosphatase H (1115 aa).

An N-terminal signal peptide occupies residues 1 to 27; that stretch reads MAGAGGGLGVWGNLVLLGLCSWTGARA. The Extracellular segment spans residues 28–754; sequence PAPNPGRNLT…VVCHTESAGV (727 aa). 8 Fibronectin type-III domains span residues 32 to 121, 122 to 209, 210 to 299, 300 to 387, 388 to 477, 478 to 563, 564 to 666, and 665 to 749; these read PGRN…APNP, VRNL…TAHN, PVRN…APNP, VRNL…TAPN, PVRN…VPNA, VTSL…TAAT, APNE…TYPD, and PDTV…VCHT. 10 N-linked (GlcNAc...) asparagine glycosylation sites follow: N35, N83, N172, N256, N285, N350, N434, N468, N556, and N642. Residues 755-775 traverse the membrane as a helical segment; sequence IAGAFVGILLFLILVGLLIFF. The Cytoplasmic portion of the chain corresponds to 776–1115; that stretch reads LKRRNKKKQQ…AAIQAHKLEV (340 aa). One can recognise a Tyrosine-protein phosphatase domain in the interval 820 to 1079; sequence FADEYQQLSL…VFLHQCILRF (260 aa). The active-site Phosphocysteine intermediate is the C1020. A phosphotyrosine mark is found at Y1094 and Y1102.

Belongs to the protein-tyrosine phosphatase family. Receptor class 3 subfamily. As to quaternary structure, homodimer; disulfide-linked. Interacts with LCK. Interacts (phosphorylated form) with GRB2 (via SH2 domain). Interacts (phosphorylated form) with FYN (via SH2 domain). Interacts (via extracellular domain) with CEACAM20 (via extracellular domain); the interaction dephosphorylates CEACAM20. In terms of tissue distribution, expressed at high levels in the brain, spleen and liver and at lower levels in the heart and stomach. Expressed in pancreatic and colorectal cancer cells, but not in normal pancreas or colon. Expression in hepatocellular carcinoma is related to the differentiation status of the tumor and expression is inversely related to tumor aggressiveness.

The protein localises to the cell projection. Its subcellular location is the microvillus membrane. It is found in the apical cell membrane. It localises to the cytoplasm. It carries out the reaction O-phospho-L-tyrosyl-[protein] + H2O = L-tyrosyl-[protein] + phosphate. With respect to regulation, regulated by reversible dimerization. Dimerization reduces its catalytic activity. In terms of biological role, protein phosphatase that may contribute to contact inhibition of cell growth and motility by mediating the dephosphorylation of focal adhesion-associated substrates and thus negatively regulating integrin-promoted signaling processes. Induces apoptotic cell death by at least two distinct mechanisms: inhibition of cell survival signaling mediated by PI 3-kinase, Akt, and ILK and activation of a caspase-dependent proapoptotic pathway. Inhibits the basal activity of LCK and its activation in response to TCR stimulation and TCR-induced activation of MAP kinase and surface expression of CD69. Inhibits TCR-induced tyrosine phosphorylation of LAT and ZAP70. Inhibits both basal activity of DOK1 and its CD2-induced tyrosine phosphorylation. Induces dephosphorylation of BCAR1, focal adhesion kinase and SRC. Reduces migratory activity of activity of Jurkat cells. Reduces tyrosine phosphorylation of CEACAM20 and thereby contributes to suppress the intestinal immune response CEACAM20. The protein is Receptor-type tyrosine-protein phosphatase H (PTPRH) of Homo sapiens (Human).